The sequence spans 316 residues: Cytochrome c biogenesis protein CcsA (316 aa).

Transmembrane regions (helical) follow at residues 19-39 (VLTL…FSFW), 47-67 (SSIV…QLVF), 77-97 (ISNL…IQLL), 106-126 (LIQA…SFVL), 151-171 (VIMC…VVLL), 224-244 (TITF…VWAN), 258-275 (TWAF…HTRL), and 285-305 (AIIA…VNFL).

Belongs to the CcmF/CycK/Ccl1/NrfE/CcsA family. May interact with ccs1.

Its subcellular location is the cellular thylakoid membrane. Functionally, required during biogenesis of c-type cytochromes (cytochrome c6 and cytochrome f) at the step of heme attachment. In Prochlorococcus marinus (strain SARG / CCMP1375 / SS120), this protein is Cytochrome c biogenesis protein CcsA.